The chain runs to 510 residues: ATP synthase subunit alpha (510 aa).

169-176 provides a ligand contact to ATP; sequence GDRQTGKT.

The protein belongs to the ATPase alpha/beta chains family. F-type ATPases have 2 components, CF(1) - the catalytic core - and CF(0) - the membrane proton channel. CF(1) has five subunits: alpha(3), beta(3), gamma(1), delta(1), epsilon(1). CF(0) has three main subunits: a(1), b(2) and c(9-12). The alpha and beta chains form an alternating ring which encloses part of the gamma chain. CF(1) is attached to CF(0) by a central stalk formed by the gamma and epsilon chains, while a peripheral stalk is formed by the delta and b chains.

The protein localises to the cell membrane. It carries out the reaction ATP + H2O + 4 H(+)(in) = ADP + phosphate + 5 H(+)(out). Its function is as follows. Produces ATP from ADP in the presence of a proton gradient across the membrane. The alpha chain is a regulatory subunit. The chain is ATP synthase subunit alpha from Buchnera aphidicola subsp. Schizaphis graminum (strain Sg).